Consider the following 420-residue polypeptide: Phosphatidylinositol 5-phosphate 4-kinase type-2 gamma (420 aa).

A2 is modified (N-acetylalanine). S26 is subject to Phosphoserine. The 377-residue stretch at 43-419 folds into the PIPK domain; sequence AADPLVGVFL…RFLDFISNIF (377 aa). The interval 69–75 is required for interaction with PIP5K1A; sequence VMLLPDD. S349 is subject to Phosphoserine.

As to quaternary structure, interacts with PIP5K1A; the interaction inhibits PIP5K1A kinase activity. Phosphorylated, phosphorylation is induced by EGF. Widely expressed, with the most abundant expression in kidney.

The protein localises to the endoplasmic reticulum. The protein resides in the cytoplasm. The enzyme catalyses a 1,2-diacyl-sn-glycero-3-phospho-(1D-myo-inositol-5-phosphate) + ATP = a 1,2-diacyl-sn-glycero-3-phospho-(1D-myo-inositol-4,5-bisphosphate) + ADP + H(+). It catalyses the reaction 1,2-dihexadecanoyl-sn-glycero-3-phospho-(1D-myo-inositol-5-phosphate) + ATP = 1,2-dihexadecanoyl-sn-glycero-3-phospho-(1D-myo-inositol-4,5-bisphosphate) + ADP + H(+). The catalysed reaction is 1,2-dihexadecanoyl-sn-glycero-3-phospho-(1D-myo-inositol-5-phosphate) + GTP = 1,2-dihexadecanoyl-sn-glycero-3-phospho-(1D-myo-inositol-4,5-bisphosphate) + GDP + H(+). Functionally, phosphatidylinositol 5-phosphate 4-kinase with low enzymatic activity. May be a GTP sensor, has higher GTP-dependent kinase activity than ATP-dependent kinase activity. PIP4Ks negatively regulate insulin signaling through a catalytic-independent mechanism. They interact with PIP5Ks and suppress PIP5K-mediated PtdIns(4,5)P2 synthesis and insulin-dependent conversion to PtdIns(3,4,5)P3. The protein is Phosphatidylinositol 5-phosphate 4-kinase type-2 gamma of Rattus norvegicus (Rat).